The following is a 1388-amino-acid chain: Putative ATP-dependent RNA helicase DHX57 (1388 aa).

Residues 1–11 (MSSSVRRKGKP) are compositionally biased toward basic residues. Disordered regions lie at residues 1-107 (MSSS…MTSE) and 121-154 (EQGA…AGQE). Positions 34–51 (HGGGGGGGGSCGGGGGGS) are enriched in gly residues. The span at 79–89 (DSNKSKGETRP) shows a compositional bias: basic and acidic residues. A phosphoserine mark is found at serine 128 and serine 133. The region spanning 175–220 (PVPECAVSPLAVQKLSRYGFHTEHCQLALRICDGDLGAALEHLLRQ) is the UBA domain. The C3H1-type zinc-finger motif lies at 299–326 (DTSPETCKFYLKGNCKFGSKCKFKHEVP). Serine 475 is subject to Phosphoserine. One can recognise a Helicase ATP-binding domain in the interval 555–722 (LKLLSKHQVV…FSYCPVITIP (168 aa)). 568–575 (GMTGCGKT) provides a ligand contact to ATP. The DEVH box signature appears at 669-672 (DEVH). In terms of domain architecture, Helicase C-terminal spans 832–1012 (LIEALLEWIV…QLCLRIKILE (181 aa)).

This sequence belongs to the DEAD box helicase family. DEAH subfamily.

It catalyses the reaction ATP + H2O = ADP + phosphate + H(+). In terms of biological role, probable ATP-binding RNA helicase. This chain is Putative ATP-dependent RNA helicase DHX57 (Dhx57), found in Mus musculus (Mouse).